We begin with the raw amino-acid sequence, 449 residues long: Cytochrome P450 2E1 (449 aa).

254–259 (FAGTET) lines the substrate pocket. Residue cysteine 393 coordinates heme.

The protein belongs to the cytochrome P450 family. As to quaternary structure, interacts with chaperones HSP70 and HSP90; this interaction is required for initial targeting to mitochondria. It depends on heme as a cofactor.

Its subcellular location is the endoplasmic reticulum membrane. The protein localises to the microsome membrane. It is found in the mitochondrion inner membrane. It catalyses the reaction an organic molecule + reduced [NADPH--hemoprotein reductase] + O2 = an alcohol + oxidized [NADPH--hemoprotein reductase] + H2O + H(+). The enzyme catalyses (5Z,8Z,11Z)-eicosatrienoate + reduced [NADPH--hemoprotein reductase] + O2 = 19-hydroxy-(5Z,8Z,11Z)-eicosatrienoate + oxidized [NADPH--hemoprotein reductase] + H2O + H(+). It carries out the reaction (5Z,8Z,11Z,14Z,17Z)-eicosapentaenoate + reduced [NADPH--hemoprotein reductase] + O2 = 19-hydroxy-(5Z,8Z,11Z,14Z,17Z)-eicosapentaenoate + oxidized [NADPH--hemoprotein reductase] + H2O + H(+). The catalysed reaction is (4Z,7Z,10Z,13Z,16Z,19Z)-docosahexaenoate + reduced [NADPH--hemoprotein reductase] + O2 = 21-hydroxy-(4Z,7Z,10Z,13Z,16Z,19Z)-docosahexaenoate + oxidized [NADPH--hemoprotein reductase] + H2O + H(+). It catalyses the reaction dodecanoate + reduced [NADPH--hemoprotein reductase] + O2 = 11-hydroxydodecanoate + oxidized [NADPH--hemoprotein reductase] + H2O + H(+). The enzyme catalyses tetradecanoate + reduced [NADPH--hemoprotein reductase] + O2 = 13-hydroxytetradecanoate + oxidized [NADPH--hemoprotein reductase] + H2O + H(+). It carries out the reaction 4-nitrophenol + NADPH + O2 + H(+) = 4-nitrocatechol + NADP(+) + H2O. It participates in lipid metabolism; fatty acid metabolism. Its activity is regulated as follows. The omega-1 hydroxylase activity is stimulated by cytochrome b5. A cytochrome P450 monooxygenase involved in the metabolism of fatty acids. Mechanistically, uses molecular oxygen inserting one oxygen atom into a substrate, and reducing the second into a water molecule, with two electrons provided by NADPH via cytochrome P450 reductase (NADPH--hemoprotein reductase). Catalyzes the hydroxylation of carbon-hydrogen bonds. Hydroxylates fatty acids specifically at the omega-1 position displaying the highest catalytic activity for saturated fatty acids. May be involved in the oxidative metabolism of xenobiotics. This is Cytochrome P450 2E1 (CYP2E1) from Macaca fascicularis (Crab-eating macaque).